Consider the following 344-residue polypeptide: Succinylglutamate desuccinylase (344 aa).

Zn(2+) contacts are provided by His-63, Glu-66, and His-160. Glu-224 is a catalytic residue.

The protein belongs to the AspA/AstE family. Succinylglutamate desuccinylase subfamily. Zn(2+) serves as cofactor.

The catalysed reaction is N-succinyl-L-glutamate + H2O = L-glutamate + succinate. The protein operates within amino-acid degradation; L-arginine degradation via AST pathway; L-glutamate and succinate from L-arginine: step 5/5. Functionally, transforms N(2)-succinylglutamate into succinate and glutamate. The polypeptide is Succinylglutamate desuccinylase (Shewanella sp. (strain MR-4)).